The primary structure comprises 287 residues: Phosphatidylserine decarboxylase proenzyme (287 aa).

Catalysis depends on charge relay system; for autoendoproteolytic cleavage activity residues D90, H147, and S252. S252 serves as the catalytic Schiff-base intermediate with substrate; via pyruvic acid; for decarboxylase activity. S252 bears the Pyruvic acid (Ser); by autocatalysis mark.

This sequence belongs to the phosphatidylserine decarboxylase family. PSD-B subfamily. Prokaryotic type I sub-subfamily. Heterodimer of a large membrane-associated beta subunit and a small pyruvoyl-containing alpha subunit. Pyruvate serves as cofactor. Is synthesized initially as an inactive proenzyme. Formation of the active enzyme involves a self-maturation process in which the active site pyruvoyl group is generated from an internal serine residue via an autocatalytic post-translational modification. Two non-identical subunits are generated from the proenzyme in this reaction, and the pyruvate is formed at the N-terminus of the alpha chain, which is derived from the carboxyl end of the proenzyme. The autoendoproteolytic cleavage occurs by a canonical serine protease mechanism, in which the side chain hydroxyl group of the serine supplies its oxygen atom to form the C-terminus of the beta chain, while the remainder of the serine residue undergoes an oxidative deamination to produce ammonia and the pyruvoyl prosthetic group on the alpha chain. During this reaction, the Ser that is part of the protease active site of the proenzyme becomes the pyruvoyl prosthetic group, which constitutes an essential element of the active site of the mature decarboxylase.

Its subcellular location is the cell membrane. It carries out the reaction a 1,2-diacyl-sn-glycero-3-phospho-L-serine + H(+) = a 1,2-diacyl-sn-glycero-3-phosphoethanolamine + CO2. It participates in phospholipid metabolism; phosphatidylethanolamine biosynthesis; phosphatidylethanolamine from CDP-diacylglycerol: step 2/2. Catalyzes the formation of phosphatidylethanolamine (PtdEtn) from phosphatidylserine (PtdSer). This chain is Phosphatidylserine decarboxylase proenzyme, found in Pseudomonas entomophila (strain L48).